The chain runs to 67 residues: Large ribosomal subunit protein uL29 (67 aa).

Belongs to the universal ribosomal protein uL29 family.

The chain is Large ribosomal subunit protein uL29 from Wolbachia sp. subsp. Drosophila simulans (strain wRi).